A 240-amino-acid polypeptide reads, in one-letter code: Peptidyl-tRNA hydrolase (240 aa).

TRNA is bound at residue tyrosine 14. Catalysis depends on histidine 19, which acts as the Proton acceptor. The tRNA site is built by phenylalanine 64, asparagine 66, and asparagine 112. The interval 196–227 is disordered; it reads EKPAQKQQPKQQSHIRQARSQQAPAKLPETGP. Residues 209 to 218 show a composition bias toward polar residues; sequence HIRQARSQQA.

This sequence belongs to the PTH family. Monomer.

Its subcellular location is the cytoplasm. The catalysed reaction is an N-acyl-L-alpha-aminoacyl-tRNA + H2O = an N-acyl-L-amino acid + a tRNA + H(+). Its function is as follows. Hydrolyzes ribosome-free peptidyl-tRNAs (with 1 or more amino acids incorporated), which drop off the ribosome during protein synthesis, or as a result of ribosome stalling. Catalyzes the release of premature peptidyl moieties from peptidyl-tRNA molecules trapped in stalled 50S ribosomal subunits, and thus maintains levels of free tRNAs and 50S ribosomes. The sequence is that of Peptidyl-tRNA hydrolase from Mesorhizobium japonicum (strain LMG 29417 / CECT 9101 / MAFF 303099) (Mesorhizobium loti (strain MAFF 303099)).